Consider the following 414-residue polypeptide: Enolase (414 aa).

(2R)-2-phosphoglycerate is bound at residue Q162. E204 (proton donor) is an active-site residue. Residues D239, E280, and D307 each coordinate Mg(2+). Residues K332, R361, S362, and K383 each coordinate (2R)-2-phosphoglycerate. The Proton acceptor role is filled by K332.

Belongs to the enolase family. Requires Mg(2+) as cofactor.

Its subcellular location is the cytoplasm. It localises to the secreted. It is found in the cell surface. It catalyses the reaction (2R)-2-phosphoglycerate = phosphoenolpyruvate + H2O. It participates in carbohydrate degradation; glycolysis; pyruvate from D-glyceraldehyde 3-phosphate: step 4/5. Its function is as follows. Catalyzes the reversible conversion of 2-phosphoglycerate (2-PG) into phosphoenolpyruvate (PEP). It is essential for the degradation of carbohydrates via glycolysis. The protein is Enolase of Campylobacter jejuni (strain RM1221).